The following is a 103-amino-acid chain: Large ribosomal subunit protein uL24 (103 aa).

Belongs to the universal ribosomal protein uL24 family. Part of the 50S ribosomal subunit.

One of two assembly initiator proteins, it binds directly to the 5'-end of the 23S rRNA, where it nucleates assembly of the 50S subunit. Its function is as follows. One of the proteins that surrounds the polypeptide exit tunnel on the outside of the subunit. The polypeptide is Large ribosomal subunit protein uL24 (Mannheimia succiniciproducens (strain KCTC 0769BP / MBEL55E)).